The primary structure comprises 486 residues: MRGGDGEEGSESRVALLKSPHTAEEDGEGLKDRILVETKKLWQIVGPAIFSRVTTYSMLVITQAFAGHLGDLELAAISIVNNVTVGFNFGLLLGMASALETLCGQAFGAKKYHMLGVYMQRSWIVLFFCCVLLLPTYIFTTPVLKFLGQPDDIAELSGVVAIWVIPLHFAFTLSFPLQRFLQCQLKNRVTAYAAAVALVVHILVCWLFVDGLKLGVVGTVATISISWWVNVLILLVYSTCGGCPLTWTGLSSEALTGLWEFLKLSASSGVMLCLENWYYRILIIMTGNLQNARIAVDSLSICMAINGWEMMIPLAFFAGTGVRVANELGAGNGKGARFATIVSVTQSLIIGLFFWVLIMLLHNQIAWIFSSSVAVLDAVNKLSLLLAFTVLLNSVQPVLSGVAVGSGWQSYVAYINLGCYYCIGVPLGFLMGWGFKLGVMGIWGGMIFGGTAVQTMILSFITMRCDWEKEAQKASARINKWSNTIK.

A disordered region spans residues 1-25 (MRGGDGEEGSESRVALLKSPHTAEE). A run of 12 helical transmembrane segments spans residues 41 to 61 (LWQI…MLVI), 74 to 94 (LAAI…LLLG), 124 to 144 (IVLF…TPVL), 153 to 173 (IAEL…AFTL), 189 to 209 (VTAY…WLFV), 216 to 236 (VVGT…ILLV), 269 to 289 (GVML…TGNL), 299 to 319 (LSIC…FFAG), 349 to 369 (IIGL…AWIF), 384 to 404 (LLLA…GVAV), 407 to 427 (GWQS…GVPL), and 439 to 461 (VMGI…LSFI).

This sequence belongs to the multi antimicrobial extrusion (MATE) (TC 2.A.66.1) family.

It is found in the membrane. The chain is Protein DETOXIFICATION 27 from Arabidopsis thaliana (Mouse-ear cress).